A 118-amino-acid polypeptide reads, in one-letter code: Small ribosomal subunit protein uS13 (118 aa).

Positions 94–118 (SLPVRGQRTKTNARTRKGPRKAIKK) are disordered.

Belongs to the universal ribosomal protein uS13 family. As to quaternary structure, part of the 30S ribosomal subunit. Forms a loose heterodimer with protein S19. Forms two bridges to the 50S subunit in the 70S ribosome.

Functionally, located at the top of the head of the 30S subunit, it contacts several helices of the 16S rRNA. In the 70S ribosome it contacts the 23S rRNA (bridge B1a) and protein L5 of the 50S subunit (bridge B1b), connecting the 2 subunits; these bridges are implicated in subunit movement. Contacts the tRNAs in the A and P-sites. The chain is Small ribosomal subunit protein uS13 from Aeromonas hydrophila subsp. hydrophila (strain ATCC 7966 / DSM 30187 / BCRC 13018 / CCUG 14551 / JCM 1027 / KCTC 2358 / NCIMB 9240 / NCTC 8049).